A 108-amino-acid polypeptide reads, in one-letter code: Large ribosomal subunit protein uL24 (108 aa).

Belongs to the universal ribosomal protein uL24 family. In terms of assembly, part of the 50S ribosomal subunit.

Functionally, one of two assembly initiator proteins, it binds directly to the 5'-end of the 23S rRNA, where it nucleates assembly of the 50S subunit. One of the proteins that surrounds the polypeptide exit tunnel on the outside of the subunit. In Trichlorobacter lovleyi (strain ATCC BAA-1151 / DSM 17278 / SZ) (Geobacter lovleyi), this protein is Large ribosomal subunit protein uL24.